The following is a 485-amino-acid chain: Probable glycine dehydrogenase (decarboxylating) subunit 2 (485 aa).

Residue lysine 269 is modified to N6-(pyridoxal phosphate)lysine.

The protein belongs to the GcvP family. C-terminal subunit subfamily. In terms of assembly, the glycine cleavage system is composed of four proteins: P, T, L and H. In this organism, the P 'protein' is a heterodimer of two subunits. Pyridoxal 5'-phosphate serves as cofactor.

The catalysed reaction is N(6)-[(R)-lipoyl]-L-lysyl-[glycine-cleavage complex H protein] + glycine + H(+) = N(6)-[(R)-S(8)-aminomethyldihydrolipoyl]-L-lysyl-[glycine-cleavage complex H protein] + CO2. Its function is as follows. The glycine cleavage system catalyzes the degradation of glycine. The P protein binds the alpha-amino group of glycine through its pyridoxal phosphate cofactor; CO(2) is released and the remaining methylamine moiety is then transferred to the lipoamide cofactor of the H protein. The protein is Probable glycine dehydrogenase (decarboxylating) subunit 2 of Chlorobium phaeovibrioides (strain DSM 265 / 1930) (Prosthecochloris vibrioformis (strain DSM 265)).